The primary structure comprises 150 residues: Small ribosomal subunit protein eS19 (150 aa).

This sequence belongs to the eukaryotic ribosomal protein eS19 family. Part of the 30S ribosomal subunit.

In terms of biological role, may be involved in maturation of the 30S ribosomal subunit. This is Small ribosomal subunit protein eS19 (rps19e) from Pyrococcus abyssi (strain GE5 / Orsay).